The sequence spans 219 residues: Thiamine-phosphate synthase (219 aa).

4-amino-2-methyl-5-(diphosphooxymethyl)pyrimidine contacts are provided by residues Gln48–Lys52 and Asn80. Mg(2+) is bound by residues Asp81 and Asp100. Ser119 is a 4-amino-2-methyl-5-(diphosphooxymethyl)pyrimidine binding site. Thr145 to Thr147 contacts 2-[(2R,5Z)-2-carboxy-4-methylthiazol-5(2H)-ylidene]ethyl phosphate. Lys148 serves as a coordination point for 4-amino-2-methyl-5-(diphosphooxymethyl)pyrimidine. 2-[(2R,5Z)-2-carboxy-4-methylthiazol-5(2H)-ylidene]ethyl phosphate-binding positions include Gly176 and Val196 to Ser197.

It belongs to the thiamine-phosphate synthase family. Mg(2+) serves as cofactor.

The enzyme catalyses 2-[(2R,5Z)-2-carboxy-4-methylthiazol-5(2H)-ylidene]ethyl phosphate + 4-amino-2-methyl-5-(diphosphooxymethyl)pyrimidine + 2 H(+) = thiamine phosphate + CO2 + diphosphate. The catalysed reaction is 2-(2-carboxy-4-methylthiazol-5-yl)ethyl phosphate + 4-amino-2-methyl-5-(diphosphooxymethyl)pyrimidine + 2 H(+) = thiamine phosphate + CO2 + diphosphate. It carries out the reaction 4-methyl-5-(2-phosphooxyethyl)-thiazole + 4-amino-2-methyl-5-(diphosphooxymethyl)pyrimidine + H(+) = thiamine phosphate + diphosphate. It functions in the pathway cofactor biosynthesis; thiamine diphosphate biosynthesis; thiamine phosphate from 4-amino-2-methyl-5-diphosphomethylpyrimidine and 4-methyl-5-(2-phosphoethyl)-thiazole: step 1/1. Functionally, condenses 4-methyl-5-(beta-hydroxyethyl)thiazole monophosphate (THZ-P) and 2-methyl-4-amino-5-hydroxymethyl pyrimidine pyrophosphate (HMP-PP) to form thiamine monophosphate (TMP). The polypeptide is Thiamine-phosphate synthase (Albidiferax ferrireducens (strain ATCC BAA-621 / DSM 15236 / T118) (Rhodoferax ferrireducens)).